Here is a 467-residue protein sequence, read N- to C-terminus: Uronate isomerase (467 aa).

Belongs to the metallo-dependent hydrolases superfamily. Uronate isomerase family.

The enzyme catalyses D-glucuronate = D-fructuronate. It catalyses the reaction aldehydo-D-galacturonate = keto-D-tagaturonate. It participates in carbohydrate metabolism; pentose and glucuronate interconversion. This is Uronate isomerase from Streptococcus uberis (strain ATCC BAA-854 / 0140J).